The chain runs to 448 residues: Asparagine--tRNA ligase (448 aa).

The protein belongs to the class-II aminoacyl-tRNA synthetase family. As to quaternary structure, homodimer.

It localises to the cytoplasm. It catalyses the reaction tRNA(Asn) + L-asparagine + ATP = L-asparaginyl-tRNA(Asn) + AMP + diphosphate + H(+). In Streptococcus mutans serotype c (strain ATCC 700610 / UA159), this protein is Asparagine--tRNA ligase.